The following is a 1034-amino-acid chain: Enteropeptidase (1034 aa).

Positions M1–A51 are excised as a propeptide. Topologically, residues G2 to E18 are cytoplasmic. The chain crosses the membrane as a helical; Signal-anchor for type II membrane protein span at residues V19–E47. The Extracellular segment spans residues K48 to H1034. An SEA domain is found at K54–E169. 4 N-linked (GlcNAc...) asparagine glycosylation sites follow: N116, N147, N170, and N194. Positions I197 to T238 constitute an LDL-receptor class A 1 domain. 4 disulfide bridges follow: C199–C212, C206–C225, C219–C236, and C240–C268. The CUB 1 domain maps to C240–F349. N-linked (GlcNAc...) asparagine glycans are attached at residues N283, N343, N350, N403, N455, N485, N518, N549, and N645. The 163-residue stretch at D357–V519 folds into the MAM domain. C539 and C567 are oxidised to a cystine. The region spanning C539–G649 is the CUB 2 domain. One can recognise an LDL-receptor class A 2 domain in the interval E656–R694. Intrachain disulfides connect C658/C670, C665/C683, and C677/C692. The SRCR domain occupies V693 to S786. Residues N697, N701, N721, N740, and N761 are each glycosylated (N-linked (GlcNAc...) asparagine). Disulfide bonds link C772–C782, C787–C911, C825–C841, C925–C992, C956–C971, and C982–C1010. The Peptidase S1 domain maps to I800–H1034. An N-linked (GlcNAc...) asparagine glycan is attached at N804. The active-site Charge relay system is the H840. The N-linked (GlcNAc...) asparagine glycan is linked to N863. Catalysis depends on D891, which acts as the Charge relay system. N-linked (GlcNAc...) asparagine glycosylation is found at N902 and N964. S986 serves as the catalytic Charge relay system.

This sequence belongs to the peptidase S1 family. As to quaternary structure, heterotrimer of a catalytic (light) chain, a multidomain (heavy) chain, and a mini chain. In terms of processing, the chains are derived from a single precursor that is cleaved by a trypsin-like protease. The mini chain may be cleaved by elastase.

The protein localises to the membrane. It carries out the reaction Activation of trypsinogen by selective cleavage of 6-Lys-|-Ile-7 bond.. Responsible for initiating activation of pancreatic proteolytic proenzymes (trypsin, chymotrypsin and carboxypeptidase A). It catalyzes the conversion of trypsinogen to trypsin which in turn activates other proenzymes including chymotrypsinogen, procarboxypeptidases, and proelastases. The sequence is that of Enteropeptidase (TMPRSS15) from Sus scrofa (Pig).